The primary structure comprises 163 residues: Cyclic pyranopterin monophosphate synthase (163 aa).

Substrate-binding positions include 75-77 (LCH) and 115-116 (ME). The active site involves aspartate 130.

It belongs to the MoaC family. As to quaternary structure, homohexamer; trimer of dimers.

It carries out the reaction (8S)-3',8-cyclo-7,8-dihydroguanosine 5'-triphosphate = cyclic pyranopterin phosphate + diphosphate. Its pathway is cofactor biosynthesis; molybdopterin biosynthesis. In terms of biological role, catalyzes the conversion of (8S)-3',8-cyclo-7,8-dihydroguanosine 5'-triphosphate to cyclic pyranopterin monophosphate (cPMP). The sequence is that of Cyclic pyranopterin monophosphate synthase from Variovorax paradoxus (strain S110).